The chain runs to 348 residues: Erythronate-4-phosphate dehydrogenase (348 aa).

Substrate is bound by residues threonine 46 and threonine 67. Aspartate 147 is a binding site for NAD(+). The active site involves arginine 209. Aspartate 233 contributes to the NAD(+) binding site. Glutamate 238 is a catalytic residue. Histidine 255 acts as the Proton donor in catalysis. Glycine 258 provides a ligand contact to NAD(+). Residue tyrosine 259 coordinates substrate.

The protein belongs to the D-isomer specific 2-hydroxyacid dehydrogenase family. PdxB subfamily. In terms of assembly, homodimer.

It is found in the cytoplasm. It catalyses the reaction 4-phospho-D-erythronate + NAD(+) = (R)-3-hydroxy-2-oxo-4-phosphooxybutanoate + NADH + H(+). Its pathway is cofactor biosynthesis; pyridoxine 5'-phosphate biosynthesis; pyridoxine 5'-phosphate from D-erythrose 4-phosphate: step 2/5. Its function is as follows. Catalyzes the oxidation of erythronate-4-phosphate to 3-hydroxy-2-oxo-4-phosphonooxybutanoate. The protein is Erythronate-4-phosphate dehydrogenase of Bacteroides fragilis (strain YCH46).